The sequence spans 617 residues: Chaperone protein DnaK (617 aa).

Residues Lys-579 to Lys-617 are disordered. The segment covering Ala-580–Ala-594 has biased composition (low complexity). A compositionally biased stretch (acidic residues) spans Thr-602 to Lys-617.

The protein belongs to the heat shock protein 70 family.

Acts as a chaperone. The sequence is that of Chaperone protein DnaK from Methanosarcina acetivorans (strain ATCC 35395 / DSM 2834 / JCM 12185 / C2A).